The primary structure comprises 87 residues: MANHKSAEKRARQTIKKTERNRFYRTRLKNITKAVREAAANGNKNAANEALKVANKSIHAMVSRGFIKKQTASRRVSRLALLVNKIA.

A disordered region spans residues 1-20; the sequence is MANHKSAEKRARQTIKKTER.

It belongs to the bacterial ribosomal protein bS20 family.

Binds directly to 16S ribosomal RNA. The polypeptide is Small ribosomal subunit protein bS20 (Campylobacter jejuni subsp. jejuni serotype O:2 (strain ATCC 700819 / NCTC 11168)).